We begin with the raw amino-acid sequence, 242 residues long: ATP-dependent dethiobiotin synthetase BioD (242 aa).

12 to 17 (EVGKTV) contacts ATP. Threonine 16 is a binding site for Mg(2+). The active site involves lysine 37. Serine 41 is a binding site for substrate. Residues aspartate 51 and 112–115 (EGAG) each bind ATP. Residues aspartate 51 and glutamate 112 each coordinate Mg(2+).

Belongs to the dethiobiotin synthetase family. Homodimer. Mg(2+) is required as a cofactor.

Its subcellular location is the cytoplasm. The catalysed reaction is (7R,8S)-7,8-diammoniononanoate + CO2 + ATP = (4R,5S)-dethiobiotin + ADP + phosphate + 3 H(+). The protein operates within cofactor biosynthesis; biotin biosynthesis; biotin from 7,8-diaminononanoate: step 1/2. Catalyzes a mechanistically unusual reaction, the ATP-dependent insertion of CO2 between the N7 and N8 nitrogen atoms of 7,8-diaminopelargonic acid (DAPA, also called 7,8-diammoniononanoate) to form a ureido ring. The chain is ATP-dependent dethiobiotin synthetase BioD from Bacillus cereus (strain ATCC 14579 / DSM 31 / CCUG 7414 / JCM 2152 / NBRC 15305 / NCIMB 9373 / NCTC 2599 / NRRL B-3711).